A 204-amino-acid chain; its full sequence is Apoptosis regulator R11 (204 aa).

The BH1 motif lies at 101 to 120; it reads ELFRDGTNWGRIVAFFSFGR. A BH2 motif is present at residues 152 to 167; the sequence is PWMQENGGWEAFVGLY. A helical transmembrane segment spans residues 181 to 198; that stretch reads RFGRLLTIVMLTGVFALV.

This sequence belongs to the Bcl-2 family.

It localises to the membrane. In terms of biological role, confers strong protection against cell death. This is Apoptosis regulator R11 from Xenopus laevis (African clawed frog).